Consider the following 220-residue polypeptide: Deoxyribose-phosphate aldolase 2 (220 aa).

Catalysis depends on aspartate 89, which acts as the Proton donor/acceptor. Lysine 151 functions as the Schiff-base intermediate with acetaldehyde in the catalytic mechanism. Lysine 180 (proton donor/acceptor) is an active-site residue.

It belongs to the DeoC/FbaB aldolase family. DeoC type 1 subfamily.

The protein localises to the cytoplasm. It carries out the reaction 2-deoxy-D-ribose 5-phosphate = D-glyceraldehyde 3-phosphate + acetaldehyde. It participates in carbohydrate degradation; 2-deoxy-D-ribose 1-phosphate degradation; D-glyceraldehyde 3-phosphate and acetaldehyde from 2-deoxy-alpha-D-ribose 1-phosphate: step 2/2. Its function is as follows. Catalyzes a reversible aldol reaction between acetaldehyde and D-glyceraldehyde 3-phosphate to generate 2-deoxy-D-ribose 5-phosphate. This is Deoxyribose-phosphate aldolase 2 from Staphylococcus aureus (strain COL).